Here is a 381-residue protein sequence, read N- to C-terminus: MPAVNLGMPKVPEVLAPRRKTRQISVGKVKVGGNAQVSVQSMTTTQTTNINATLQQIAELTATGCDIVRVAVPHQDDADVLHILAKKSQIPIIADIHFQPRYVFTAIDAGVGAVRVNPGNIRKFDDQVGAIAKAAKAAGVSIRIGVNAGSLHPSLLQKYGKATPEALVESAVWEASLFEEHDFHDFKISVKHNDPVIMVKAYRLLAERGDWPLHLGVTEAGPAFQGTIKSATAFGILLSEGIGDTIRVSLSAPPAEEVKVGLQILQSLNLRERKLEIVSCPSCGRAQVDVYSLAEQVTEGLKHVNVPLRVAVMGCVVNGPGEAREAELGVASGNGRGQIFVKGEVIKTVPEAEIVQTLIEEANRLAAEMPAGSIGSPEILV.

Residues Cys280, Cys283, Cys315, and Glu322 each contribute to the [4Fe-4S] cluster site.

The protein belongs to the IspG family. It depends on [4Fe-4S] cluster as a cofactor.

The enzyme catalyses (2E)-4-hydroxy-3-methylbut-2-enyl diphosphate + oxidized [flavodoxin] + H2O + 2 H(+) = 2-C-methyl-D-erythritol 2,4-cyclic diphosphate + reduced [flavodoxin]. The protein operates within isoprenoid biosynthesis; isopentenyl diphosphate biosynthesis via DXP pathway; isopentenyl diphosphate from 1-deoxy-D-xylulose 5-phosphate: step 5/6. In terms of biological role, converts 2C-methyl-D-erythritol 2,4-cyclodiphosphate (ME-2,4cPP) into 1-hydroxy-2-methyl-2-(E)-butenyl 4-diphosphate. This Clavibacter michiganensis subsp. michiganensis (strain NCPPB 382) protein is 4-hydroxy-3-methylbut-2-en-1-yl diphosphate synthase (flavodoxin).